We begin with the raw amino-acid sequence, 747 residues long: Myotubularin-related protein 12 (747 aa).

The Myotubularin phosphatase domain maps to 205–643; that stretch reads FDTLKDWCWE…PEIKVWAQRY (439 aa). An interaction with MTM1 region spans residues 449-558; sequence VPVFLLFLDC…KGQRKGMRFK (110 aa). Phosphoserine occurs at positions 564, 601, and 716.

The protein belongs to the protein-tyrosine phosphatase family. Non-receptor class myotubularin subfamily. As to quaternary structure, heterodimer with lipid phosphatase MTM1. Heterodimer with lipid phosphatase MTMR2. Expressed in skeletal muscles (at protein level). Ubiquitous with prominent expression in brain, heart, kidney, placenta, and lung.

It is found in the cytoplasm. It localises to the sarcoplasmic reticulum. Its subcellular location is the myofibril. The protein localises to the sarcomere. Functionally, acts as an adapter for the myotubularin-related phosphatases. Regulates phosphatase MTM1 protein stability and possibly its intracellular location. By stabilizing MTM1 protein levels, required for skeletal muscle maintenance but not for myogenesis. This chain is Myotubularin-related protein 12 (MTMR12), found in Homo sapiens (Human).